The sequence spans 285 residues: MTYPLLTRKTLMKKTPLALLLTLGLLQTPLAAFAATAPLDLVGPVSDYKIYVTENIEELVSHTQKFTDAVKKGDIATAKKLYAPTRVYYESVEPIAELFSDLDASIDSRVDDHEQGVAAEDFTGFHRLEYALFSQNTTKDQGPIADKLLSDVKDLEKRVADLTFPPEKVVGGAAALLEEVAATKISGEEDRYSHTDLYDFQGNIDGAKKIVDLFRPQIEQQDKAFSSKVDKNFATVDKILAKYKTKDGGFETYDKVKENDRKALVGPVNTLAEDLSTLRGKLGLN.

The first 34 residues, 1-34 (MTYPLLTRKTLMKKTPLALLLTLGLLQTPLAAFA), serve as a signal peptide directing secretion.

This sequence belongs to the EfeM/EfeO family. In terms of assembly, component of the iron transporter efeUOB/M complex composed of EfeU, EfeM and EfeB.

Its subcellular location is the periplasm. Part of the iron transporter system efeUOB/M involved in iron import. Specifically binds Fe(3+), which is produced by EfeB-mediated oxidation of Fe(2+), and delivers it to the cell inner membrane permease EfeU. Also binds Zn(2+) and Cu(2+) in vitro. The protein is Iron uptake system component EfeM of Pseudomonas syringae pv. syringae (strain B728a).